Here is a 2175-residue protein sequence, read N- to C-terminus: Non-reducing polyketide synthase PKS1 (2175 aa).

The interval leucine 5–histidine 242 is N-terminal acylcarrier protein transacylase domain (SAT). The region spanning threonine 369–aspartate 801 is the Ketosynthase family 3 (KS3) domain. Active-site for beta-ketoacyl synthase activity residues include cysteine 541, histidine 676, and histidine 719. The tract at residues phenylalanine 900 to threonine 1212 is malonyl-CoA:ACP transacylase (MAT) domain. Serine 988 acts as the For acyl/malonyl transferase activity in catalysis. Positions serine 1285–proline 1604 are product template (PT) domain. Residues glutamine 1289–valine 1424 form an N-terminal hotdog fold region. Residues glutamine 1289–asparagine 1599 enclose the PKS/mFAS DH domain. Residue histidine 1321 is the Proton acceptor; for dehydratase activity of the active site. A C-terminal hotdog fold region spans residues alanine 1452–asparagine 1599. Aspartate 1512 serves as the catalytic Proton donor; for dehydratase activity. The segment at proline 1640–alanine 1664 is disordered. The span at lysine 1643–alanine 1664 shows a compositional bias: low complexity. Residues lysine 1666–asparagine 1743 enclose the Carrier 1 domain. Serine 1703 is modified (O-(pantetheine 4'-phosphoryl)serine). The segment at alanine 1766–valine 1804 is disordered. The span at threonine 1774–glutamine 1784 shows a compositional bias: polar residues. The region spanning serine 1801 to proline 1878 is the Carrier 2 domain. Serine 1838 bears the O-(pantetheine 4'-phosphoryl)serine mark. Residues lysine 1879 to valine 1899 form a disordered region. The segment covering lysine 1889–valine 1899 has biased composition (polar residues). The segment at lysine 1932 to proline 2158 is claisen cyclase domain. Serine 2002 functions as the For Claisen cyclase activity in the catalytic mechanism.

Pantetheine 4'-phosphate is required as a cofactor.

The enzyme catalyses 6 malonyl-CoA + acetyl-CoA + 6 H(+) = naphtopyrone YWA1 + 6 CO2 + 7 CoA + H2O. Its pathway is pigment biosynthesis; melanin biosynthesis. In terms of biological role, non-reducing polyketide synthase; part of the gene cluster 29 that mediates the biosynthesis of mediates the biosynthesis of dihydroxynaphthalene (DHN)-melanin, a bluish-green pigment and a structural component of the conidial wall. The first step of the pathway is the production of the heptaketide naphtopyrone YWA1 by the polyketide synthase PKS1 though condensation of acetyl-CoA with malonyl-CoA. This Zymoseptoria tritici (strain CBS 115943 / IPO323) (Speckled leaf blotch fungus) protein is Non-reducing polyketide synthase PKS1.